Here is an 893-residue protein sequence, read N- to C-terminus: Protein translocase subunit SecA (893 aa).

ATP is bound by residues Gln87, 105–109 (GEGKT), and Asp512. The span at 840–849 (VEEQHRKSEE) shows a compositional bias: basic and acidic residues. A disordered region spans residues 840-893 (VEEQHRKSEEVPMDFQHQSASSPSEQAQTPRVGRNEPCPCGSGKKYKQCHGKLA). The segment covering 855–868 (QHQSASSPSEQAQT) has biased composition (polar residues). The Zn(2+) site is built by Cys877, Cys879, Cys888, and His889. Residues 883–893 (KKYKQCHGKLA) show a composition bias toward basic residues.

It belongs to the SecA family. In terms of assembly, monomer and homodimer. Part of the essential Sec protein translocation apparatus which comprises SecA, SecYEG and auxiliary proteins SecDF-YajC and YidC. Requires Zn(2+) as cofactor.

It is found in the cell inner membrane. The protein localises to the cytoplasm. It catalyses the reaction ATP + H2O + cellular proteinSide 1 = ADP + phosphate + cellular proteinSide 2.. Functionally, part of the Sec protein translocase complex. Interacts with the SecYEG preprotein conducting channel. Has a central role in coupling the hydrolysis of ATP to the transfer of proteins into and across the cell membrane, serving both as a receptor for the preprotein-SecB complex and as an ATP-driven molecular motor driving the stepwise translocation of polypeptide chains across the membrane. This is Protein translocase subunit SecA from Colwellia psychrerythraea (strain 34H / ATCC BAA-681) (Vibrio psychroerythus).